The following is a 101-amino-acid chain: uncharacterized protein (101 aa).

The first 17 residues, 1–17 (MKKAAVLAVVLSLGLAG), serve as a signal peptide directing secretion. Residue C18 is the site of N-palmitoyl cysteine attachment. A lipid anchor (S-diacylglycerol cysteine) is attached at C18.

It localises to the cell membrane. This is an uncharacterized protein from Pasteurella multocida (strain Pm70).